Consider the following 197-residue polypeptide: 7-methyl-GTP pyrophosphatase (197 aa).

Asp-74 serves as the catalytic Proton acceptor.

The protein belongs to the Maf family. YceF subfamily. It depends on a divalent metal cation as a cofactor.

Its subcellular location is the cytoplasm. It catalyses the reaction N(7)-methyl-GTP + H2O = N(7)-methyl-GMP + diphosphate + H(+). Functionally, nucleoside triphosphate pyrophosphatase that hydrolyzes 7-methyl-GTP (m(7)GTP). May have a dual role in cell division arrest and in preventing the incorporation of modified nucleotides into cellular nucleic acids. The sequence is that of 7-methyl-GTP pyrophosphatase from Saccharophagus degradans (strain 2-40 / ATCC 43961 / DSM 17024).